The sequence spans 77 residues: Large ribosomal subunit protein bL28 (77 aa).

Residues 1 to 20 (MSRVCQVTGKGPVTGNNISH) form a disordered region.

This sequence belongs to the bacterial ribosomal protein bL28 family.

This Pseudomonas syringae pv. tomato (strain ATCC BAA-871 / DC3000) protein is Large ribosomal subunit protein bL28.